The sequence spans 468 residues: MLRTPLLHEQDCIIGMATPPGTSGVAVLRLSGPGVLSLVVPYLYTPKGEKVAESGFKPRVMRRLNFIDPQAPDVPLDHMLVVHFPNPHSFSGEDMVELHGHGAPVVVKRIMEVLVAHGVRPADPGEFSKRAFFNNKMDLVQAEALMGLIEATSLRAAREASRQMTGTLSEHLMALKDHLVLTYAHLEAALDFSDEDIEPESEGGLLDRLAYVHAGIKKMLGTAELGRQMRDGFELAIVGRPNVGKSSLFNALSGEDRAIVTDLAGTTRDLNESNLEIHGLPILLVDTAGLRESDDPVERIGIERAWQRVERADGIVFVAEAQLGVTLEDKALLQRLPKEKALWVWNKLDQLEGALPECLQDWPEEQICGVSCHTGEGLESVVAHIVARMEQLPEHGEGVVIMQLRQQQTLQQAIVLIEEAQEMLANGQWLELVAEPLTRSIDQLTQLMGNTDYEDVLGMVFSSFCVGK.

(6S)-5-formyl-5,6,7,8-tetrahydrofolate contacts are provided by Arg-29, Glu-97, and Lys-136. Residues 232–390 (GFELAIVGRP…VVAHIVARME (159 aa)) form the TrmE-type G domain. Asn-242 is a binding site for K(+). Residues 242–247 (NVGKSS), 261–267 (TDLAGTT), and 286–289 (DTAG) each bind GTP. Ser-246 is a Mg(2+) binding site. The K(+) site is built by Thr-261, Leu-263, and Thr-266. Residue Thr-267 coordinates Mg(2+). Residue Lys-468 coordinates (6S)-5-formyl-5,6,7,8-tetrahydrofolate.

This sequence belongs to the TRAFAC class TrmE-Era-EngA-EngB-Septin-like GTPase superfamily. TrmE GTPase family. In terms of assembly, homodimer. Heterotetramer of two MnmE and two MnmG subunits. K(+) is required as a cofactor.

The protein resides in the cytoplasm. In terms of biological role, exhibits a very high intrinsic GTPase hydrolysis rate. Involved in the addition of a carboxymethylaminomethyl (cmnm) group at the wobble position (U34) of certain tRNAs, forming tRNA-cmnm(5)s(2)U34. This is tRNA modification GTPase MnmE from Magnetococcus marinus (strain ATCC BAA-1437 / JCM 17883 / MC-1).